Here is a 155-residue protein sequence, read N- to C-terminus: Small ribosomal subunit protein uS17 (155 aa).

Belongs to the universal ribosomal protein uS17 family. In terms of assembly, component of the small ribosomal subunit. Mature ribosomes consist of a small (40S) and a large (60S) subunit. The 40S subunit contains about 32 different proteins and 1 molecule of RNA (18S). The 60S subunit contains 45 different proteins and 3 molecules of RNA (25S, 5.8S and 5S).

The protein resides in the cytoplasm. In terms of biological role, component of the ribosome, a large ribonucleoprotein complex responsible for the synthesis of proteins in the cell. The small ribosomal subunit (SSU) binds messenger RNAs (mRNAs) and translates the encoded message by selecting cognate aminoacyl-transfer RNA (tRNA) molecules. The large subunit (LSU) contains the ribosomal catalytic site termed the peptidyl transferase center (PTC), which catalyzes the formation of peptide bonds, thereby polymerizing the amino acids delivered by tRNAs into a polypeptide chain. The nascent polypeptides leave the ribosome through a tunnel in the LSU and interact with protein factors that function in enzymatic processing, targeting, and the membrane insertion of nascent chains at the exit of the ribosomal tunnel. This is Small ribosomal subunit protein uS17 from Candida albicans (strain SC5314 / ATCC MYA-2876) (Yeast).